The primary structure comprises 212 residues: Proheparin-binding EGF-like growth factor (212 aa).

A signal peptide spans 1–18 (MDGRVVLIHALLTAVCSA). Residues 19 to 167 (AVGKFGRDGP…PSTYDHTTAL (149 aa)) lie on the Extracellular side of the membrane. Positions 82–108 (SKPQGPVTPKKKGNGNKRRKGKGLGKK) are disordered. Over residues 90-106 (PKKKGNGNKRRKGKGLG) the composition is skewed to basic residues. An EGF-like domain is found at 108-148 (KRDPCLRKYKDFCIHGECKYIRELGAPSCICQPGYHGERCH). 3 disulfide bridges follow: Cys112–Cys125, Cys120–Cys136, and Cys138–Cys147. A propeptide spans 153 to 212 (PVEHPPSTYDHTTALAVVAVVLSSLCLVIITALLMFRCHKRGVYDVENEEKIKLGITVNH) (C-terminal). The helical transmembrane segment at 168 to 188 (AVVAVVLSSLCLVIITALLMF) threads the bilayer. At 189–212 (RCHKRGVYDVENEEKIKLGITVNH) the chain is on the cytoplasmic side.

As to quaternary structure, interacts with CNIH2.

Its subcellular location is the secreted. It localises to the extracellular space. The protein localises to the cell membrane. May be involved in macrophage-mediated cellular proliferation. It is mitogenic for fibroblasts and smooth muscle but not endothelial cells. It is able to bind EGF receptor/EGFR with higher affinity than EGF itself and is a far more potent mitogen for smooth muscle cells than EGF. Plays an important role in the proper development of cranial nerves by inhibiting the migration of the cranial neural crest cells (NCCs) into the odd-numbered neuromeres (r3 and r5) of the hindbrain Plays a role in mediating v-Jun-induced oncogenic transformation. The protein is Proheparin-binding EGF-like growth factor (HBEGF) of Gallus gallus (Chicken).